The chain runs to 522 residues: Glucans biosynthesis protein G (522 aa).

The first 33 residues, 1–33 (MLDNKFGFKQRVASLRWLSAAIMLSVSAVPAWA), serve as a signal peptide directing secretion.

It belongs to the OpgD/OpgG family.

The protein localises to the periplasm. It functions in the pathway glycan metabolism; osmoregulated periplasmic glucan (OPG) biosynthesis. In terms of biological role, involved in the biosynthesis of osmoregulated periplasmic glucans (OPGs). The chain is Glucans biosynthesis protein G from Pectobacterium carotovorum subsp. carotovorum (strain PC1).